The sequence spans 246 residues: Small ribosomal subunit protein uS2 (246 aa).

The protein belongs to the universal ribosomal protein uS2 family.

The protein is Small ribosomal subunit protein uS2 of Dictyoglomus turgidum (strain DSM 6724 / Z-1310).